The following is a 326-amino-acid chain: Protein LEG1 homolog (326 aa).

An N-terminal signal peptide occupies residues 1-22; the sequence is MKSNKTIFLILLFLINFNSIYS. 5 N-linked (GlcNAc...) asparagine glycosylation sites follow: Asn-58, Asn-85, Asn-165, Asn-226, and Asn-245.

The protein belongs to the LEG1 family.

Its subcellular location is the secreted. This Dictyostelium discoideum (Social amoeba) protein is Protein LEG1 homolog.